A 362-amino-acid chain; its full sequence is S-adenosylmethionine decarboxylase proenzyme (362 aa).

Catalysis depends on residues glutamate 13 and glutamate 16. The Schiff-base intermediate with substrate; via pyruvic acid role is filled by serine 73. Pyruvic acid (Ser); by autocatalysis is present on serine 73. Cysteine 87 serves as the catalytic Proton donor; for catalytic activity. Residues serine 236 and histidine 249 each act as proton acceptor; for processing activity in the active site.

Belongs to the eukaryotic AdoMetDC family. It depends on pyruvate as a cofactor. In terms of processing, is synthesized initially as an inactive proenzyme. Formation of the active enzyme involves a self-maturation process in which the active site pyruvoyl group is generated from an internal serine residue via an autocatalytic post-translational modification. Two non-identical subunits are generated from the proenzyme in this reaction, and the pyruvate is formed at the N-terminus of the alpha chain, which is derived from the carboxyl end of the proenzyme. The post-translation cleavage follows an unusual pathway, termed non-hydrolytic serinolysis, in which the side chain hydroxyl group of the serine supplies its oxygen atom to form the C-terminus of the beta chain, while the remainder of the serine residue undergoes an oxidative deamination to produce ammonia and the pyruvoyl group blocking the N-terminus of the alpha chain.

The catalysed reaction is S-adenosyl-L-methionine + H(+) = S-adenosyl 3-(methylsulfanyl)propylamine + CO2. It functions in the pathway amine and polyamine biosynthesis; S-adenosylmethioninamine biosynthesis; S-adenosylmethioninamine from S-adenosyl-L-methionine: step 1/1. This is S-adenosylmethionine decarboxylase proenzyme (SAMDC) from Datura stramonium (Jimsonweed).